The following is a 554-amino-acid chain: Nuclear division defective protein 1 (554 aa).

Disordered stretches follow at residues 1–31 (MDRD…NNAD) and 98–117 (IQQQ…ALGS). The span at 98-113 (IQQQQQQQQQQQQQQQ) shows a compositional bias: low complexity. The residue at position 319 (T319) is a Phosphothreonine; by CDC28. Disordered stretches follow at residues 410 to 475 (PTPN…GKKP) and 493 to 554 (SSSS…FNSQ). Residues 411–427 (TPNCNSLHSTTTGTSAL) show a composition bias toward polar residues. A compositionally biased stretch (low complexity) spans 448–465 (SSSNTVSFKSKSGNNNSK). A compositionally biased stretch (basic residues) spans 466 to 475 (GRIKKNGKKP). Positions 493–513 (SSSSLSSSLNASSSAGNSNSN) are enriched in low complexity. The span at 515–524 (TKKRASKLKR) shows a compositional bias: basic residues. Low complexity predominate over residues 525-536 (SQSLLSDSGSKS). Residues 539–554 (RKSCNSKSNGNLFNSQ) are compositionally biased toward polar residues.

In terms of assembly, forms an activator complex with FKH2. In terms of processing, phosphorylation of Thr-319 by CDC28 is required for the interaction with FKH2 and recruitment to promoters.

It localises to the cytoplasm. It is found in the nucleus. Its function is as follows. Transcription activator involved in G2/M transcription through its association with FKH2. The polypeptide is Nuclear division defective protein 1 (NDD1) (Saccharomyces cerevisiae (strain ATCC 204508 / S288c) (Baker's yeast)).